Here is a 182-residue protein sequence, read N- to C-terminus: Putative manganese efflux pump MntP (182 aa).

The next 6 helical transmembrane spans lie at L6–G26, I37–V57, H71–L91, I101–L121, I131–I151, and Y162–I182.

This sequence belongs to the MntP (TC 9.B.29) family.

Its subcellular location is the cell membrane. Functionally, probably functions as a manganese efflux pump. In Bacillus anthracis (strain A0248), this protein is Putative manganese efflux pump MntP.